The following is a 275-amino-acid chain: MEMO1 family protein Nmar_0215 (275 aa).

Belongs to the MEMO1 family.

The protein is MEMO1 family protein Nmar_0215 of Nitrosopumilus maritimus (strain SCM1).